The chain runs to 699 residues: uncharacterized protein (699 aa).

Disordered regions lie at residues 175-208, 289-364, and 539-603; these read PTLGVSEFPSKHGDHSDSKTYESPISNSQAASLS, PTAK…EEPD, and RAKE…KEYL. The span at 183-194 shows a compositional bias: basic and acidic residues; the sequence is PSKHGDHSDSKT. Over residues 195-208 the composition is skewed to polar residues; sequence YESPISNSQAASLS. A compositionally biased stretch (basic residues) spans 308-322; that stretch reads SKHKKRPKRLSKFKQ. Residues 323 to 338 are compositionally biased toward basic and acidic residues; it reads AKLETKKSGNKDHATS. 2 stretches are compositionally biased toward polar residues: residues 339-360 and 548-573; these read SEKLSLGNESIHSINETRSSSI and HSNATCTIKNDDLSNTLNNRAANTKL. Residues 574-603 are compositionally biased toward basic and acidic residues; it reads NPKEEDKSTVESELKAPPKEKSSETSKEYL.

Its subcellular location is the cytoplasm. This is an uncharacterized protein from Schizosaccharomyces pombe (strain 972 / ATCC 24843) (Fission yeast).